Reading from the N-terminus, the 630-residue chain is Sodium-dependent serotonin transporter (630 aa).

Topologically, residues 1–87 are cytoplasmic; the sequence is METTPLNSQK…ERETWGKKMD (87 aa). The interval 23–60 is disordered; it reads ENGVLQKGVPTTADRAEPSQISNGYSAVPSTSAGDEAS. The segment covering 41–55 has biased composition (polar residues); it reads SQISNGYSAVPSTSA. Tyr47 bears the Phosphotyrosine mark. A helical membrane pass occupies residues 88-112; the sequence is FLLSVIGYAVDLGNIWRFPYICYQN. Positions 94, 96, 97, 98, and 101 each coordinate Na(+). Residue Asp98 participates in serotonin binding. At 113 to 115 the chain is on the extracellular side; the sequence is GGG. The chain crosses the membrane as a helical span at residues 116 to 135; sequence AFLLPYTIMAIFGGIPLFYM. At 136-160 the chain is on the cytoplasmic side; the sequence is ELALGQYHRNGCISIWRKICPIFKG. Position 142 is a phosphotyrosine (Tyr142). The chain crosses the membrane as a helical span at residues 161 to 186; the sequence is IGYAICIIAFYIASYYNTIIAWALYY. The Extracellular segment spans residues 187 to 252; it reads LISSLTDRLP…KGLQDLGTIS (66 aa). An intrachain disulfide couples Cys200 to Cys209. Residues Asn208 and Asn217 are each glycosylated (N-linked (GlcNAc...) asparagine). The chain crosses the membrane as a helical span at residues 253–271; sequence WQLTLCIVLIFTVIYFSIW. Topologically, residues 272–277 are cytoplasmic; it reads KGVKTS. Phosphothreonine is present on Thr276. Residues 278–297 form a helical membrane-spanning segment; the sequence is GKVVWVTATFPYIVLSVLLV. At 298–324 the chain is on the extracellular side; sequence RGATLPGAWRGVVFYLKPNWQKLLETG. Residues 325–347 traverse the membrane as a helical segment; it reads VWVDAAAQIFFSLGPGFGVLLAF. Residue Ser336 coordinates Na(+). The Cytoplasmic segment spans residues 348-360; the sequence is ASYNKFNNNCYQD. A helical membrane pass occupies residues 361-380; that stretch reads ALVTSVVNCMTSFVSGFVIF. Residue Asn368 coordinates Na(+). Topologically, residues 381–421 are extracellular; it reads TVLGYMAEMRNEDVSEVAKDAGPSLLFITYAEAIANMPAST. Residues 422-443 traverse the membrane as a helical segment; it reads FFAIIFFLMLITLGLDSTFAGL. Positions 434, 437, and 438 each coordinate Na(+). A serotonin-binding site is contributed by Thr439. Topologically, residues 444–463 are cytoplasmic; sequence EGVITAVLDEFPHIWAKRRE. A helical transmembrane segment spans residues 464–483; sequence WFVLIVVITCVLGSLLTLTS. Over 484–494 the chain is Extracellular; it reads GGAYVVTLLEE. The serotonin site is built by Glu494 and Tyr495. Residues 495 to 516 form a helical membrane-spanning segment; the sequence is YATGPAVLTVALIEAVAVSWFY. Residues 517 to 538 are Cytoplasmic-facing; the sequence is GITQFCSDVKEMLGFSPGWFWR. The helical transmembrane segment at 539-558 threads the bilayer; that stretch reads ICWVAISPLFLLFIICSFLM. Serotonin contacts are provided by Phe556 and Ser559. At 559-574 the chain is on the extracellular side; it reads SPPQLRLFQYNYPHWS. A helical transmembrane segment spans residues 575–595; sequence IVLGYCIGMSSVICIPTYIIY. The Cytoplasmic segment spans residues 596 to 630; that stretch reads RLISTPGTLKERIIKSITPETPTEIPCGDIRMNAV. Residues 616–624 are interaction with RAB4A; sequence TPTEIPCGD.

Belongs to the sodium:neurotransmitter symporter (SNF) (TC 2.A.22) family. SLC6A4 subfamily. Monomer or homooligomer. Interacts with TGFB1I1. Interacts with SEC23A, SEC24C and PATJ. Interacts with NOS1; the interaction may diminish the cell surface localization of SERT in the brain and, correspondingly, reduce serotonin reuptake. Interacts (via C-terminus) with SCAMP2; the interaction is direct and retains transporter molecules intracellularly. Interacts with filamentous actin and STX1A. Interacts (via the N-terminus) with STX1A (via the H3 domain); this interaction regulates SLC4A6 channel conductance. Interacts with ITGAV:ITGB3. Interacts (via C-terminus) with ITGB3; this interaction regulates SLC6A4 trafficking. In terms of processing, phosphorylation at Thr-276 increases 5-HT uptake and is required for cGMP-mediated SERT regulation. Expressed in the intestinal crypt epithelial cells and myenteric neurons of the small intestine (at protein level). Expressed in the brain.

Its subcellular location is the cell membrane. It localises to the endomembrane system. It is found in the endosome membrane. The protein localises to the synapse. The protein resides in the cell junction. Its subcellular location is the focal adhesion. It localises to the cell projection. It is found in the neuron projection. The catalysed reaction is serotonin(out) + K(+)(in) + Na(+)(out) + H(+)(in) = serotonin(in) + K(+)(out) + Na(+)(in) + H(+)(out). Functionally, serotonin transporter that cotransports serotonin with one Na(+) ion in exchange for one K(+) ion and possibly one proton in an overall electroneutral transport cycle. Transports serotonin across the plasma membrane from the extracellular compartment to the cytosol thus limiting serotonin intercellular signaling. Essential for serotonin homeostasis in the central nervous system. In the developing somatosensory cortex, acts in glutamatergic neurons to control serotonin uptake and its trophic functions accounting for proper spatial organization of cortical neurons and elaboration of sensory circuits. In the mature cortex, acts primarily in brainstem raphe neurons to mediate serotonin uptake from the synaptic cleft back into the pre-synaptic terminal thus terminating serotonin signaling at the synapse. Modulates mucosal serotonin levels in the gastrointestinal tract through uptake and clearance of serotonin in enterocytes. Required for enteric neurogenesis and gastrointestinal reflexes. Regulates blood serotonin levels by ensuring rapid high affinity uptake of serotonin from plasma to platelets, where it is further stored in dense granules via vesicular monoamine transporters and then released upon stimulation. Mechanistically, the transport cycle starts with an outward-open conformation having Na1(+) and Cl(-) sites occupied. The binding of a second extracellular Na2(+) ion and serotonin substrate leads to structural changes to outward-occluded to inward-occluded to inward-open, where the Na2(+) ion and serotonin are released into the cytosol. Binding of intracellular K(+) ion induces conformational transitions to inward-occluded to outward-open and completes the cycle by releasing K(+) possibly together with a proton bound to Asp-98 into the extracellular compartment. Na1(+) and Cl(-) ions remain bound throughout the transport cycle. Additionally, displays serotonin-induced channel-like conductance for monovalent cations, mainly Na(+) ions. The channel activity is uncoupled from the transport cycle and may contribute to the membrane resting potential or excitability. In Rattus norvegicus (Rat), this protein is Sodium-dependent serotonin transporter (Slc6a4).